A 372-amino-acid polypeptide reads, in one-letter code: Secreted beta-glucosidase SIM1 (372 aa).

The first 15 residues, 1 to 15, serve as a signal peptide directing secretion; that stretch reads MKYLTLLTVLSTALA. The interval 51–85 is disordered; it reads VTENASSGASSGETAETIQTRSSSDVSSSSDSNPV. The segment covering 52-85 has biased composition (low complexity); sequence TENASSGASSGETAETIQTRSSSDVSSSSDSNPV. Residues asparagine 54 and asparagine 351 are each glycosylated (N-linked (GlcNAc...) asparagine).

Belongs to the SUN family.

The protein localises to the secreted. The protein resides in the cell wall. Cell surface beta-glucosidase involved in cell wall maintenance and cytokinesis. Plays a role redundant to SUN41. The protein is Secreted beta-glucosidase SIM1 (SIM1) of Candida albicans (strain SC5314 / ATCC MYA-2876) (Yeast).